The primary structure comprises 430 residues: Trigger factor (430 aa).

The region spanning 164–249 is the PPIase FKBP-type domain; that stretch reads DDWAVIDHEG…LKALKTRQLP (86 aa).

It belongs to the FKBP-type PPIase family. Tig subfamily.

Its subcellular location is the cytoplasm. The enzyme catalyses [protein]-peptidylproline (omega=180) = [protein]-peptidylproline (omega=0). Involved in protein export. Acts as a chaperone by maintaining the newly synthesized protein in an open conformation. Functions as a peptidyl-prolyl cis-trans isomerase. The polypeptide is Trigger factor (Anaeromyxobacter sp. (strain Fw109-5)).